The chain runs to 111 residues: Putative pterin-4-alpha-carbinolamine dehydratase (111 aa).

This sequence belongs to the pterin-4-alpha-carbinolamine dehydratase family.

It carries out the reaction (4aS,6R)-4a-hydroxy-L-erythro-5,6,7,8-tetrahydrobiopterin = (6R)-L-erythro-6,7-dihydrobiopterin + H2O. This chain is Putative pterin-4-alpha-carbinolamine dehydratase, found in Chlorobaculum tepidum (strain ATCC 49652 / DSM 12025 / NBRC 103806 / TLS) (Chlorobium tepidum).